We begin with the raw amino-acid sequence, 101 residues long: Large ribosomal subunit protein uL24 (101 aa).

This sequence belongs to the universal ribosomal protein uL24 family. In terms of assembly, part of the 50S ribosomal subunit.

In terms of biological role, one of two assembly initiator proteins, it binds directly to the 5'-end of the 23S rRNA, where it nucleates assembly of the 50S subunit. One of the proteins that surrounds the polypeptide exit tunnel on the outside of the subunit. This Dinoroseobacter shibae (strain DSM 16493 / NCIMB 14021 / DFL 12) protein is Large ribosomal subunit protein uL24.